The following is a 92-amino-acid chain: Small ribosomal subunit protein uS19 (92 aa).

This sequence belongs to the universal ribosomal protein uS19 family.

Its function is as follows. Protein S19 forms a complex with S13 that binds strongly to the 16S ribosomal RNA. The protein is Small ribosomal subunit protein uS19 of Aeromonas hydrophila subsp. hydrophila (strain ATCC 7966 / DSM 30187 / BCRC 13018 / CCUG 14551 / JCM 1027 / KCTC 2358 / NCIMB 9240 / NCTC 8049).